The chain runs to 247 residues: 3-oxoacyl-[acyl-carrier-protein] reductase MabA (247 aa).

NADP(+) is bound by residues 25 to 27 (RGI), Arg-47, 61 to 62 (DV), Gly-90, Tyr-153, Lys-157, Ile-186, and Arg-197. Tyr-153 (proton acceptor) is an active-site residue.

This sequence belongs to the short-chain dehydrogenases/reductases (SDR) family. Homotetramer.

The protein localises to the secreted. It localises to the cell wall. The enzyme catalyses a (3R)-hydroxyacyl-[ACP] + NADP(+) = a 3-oxoacyl-[ACP] + NADPH + H(+). It participates in lipid metabolism; mycolic acid biosynthesis. Its function is as follows. Part of the mycobacterial fatty acid elongation system FAS-II, which is involved in mycolic acid biosynthesis. Catalyzes the NADPH-dependent reduction of beta-ketoacyl derivatives, the second step of the FAS-II elongation cycle. The polypeptide is 3-oxoacyl-[acyl-carrier-protein] reductase MabA (Mycobacterium bovis (strain ATCC BAA-935 / AF2122/97)).